The sequence spans 392 residues: Hercynylcysteine sulfoxide lyase (392 aa).

An N6-(pyridoxal phosphate)lysine modification is found at Lys219.

This sequence belongs to the class-V pyridoxal-phosphate-dependent aminotransferase family. EgtE subfamily. Pyridoxal 5'-phosphate is required as a cofactor.

The protein localises to the cytoplasm. The protein resides in the nucleus. It catalyses the reaction S-(hercyn-2-yl)-L-cysteine S-oxide + AH2 + H(+) = ergothioneine + pyruvate + A + NH4(+). Its pathway is amino-acid biosynthesis; ergothioneine biosynthesis. In terms of biological role, catalyzes the conversion of hercynylcysteine sulfoxide to ergothioneine by cleaving the cysteine residue at the sulfur atom, the last step in the biosynthesis pathway of ergothioneine. The protein is Hercynylcysteine sulfoxide lyase of Schizosaccharomyces pombe (strain 972 / ATCC 24843) (Fission yeast).